Consider the following 77-residue polypeptide: uncharacterized protein (77 aa).

2 consecutive 4Fe-4S ferredoxin-type domains span residues 3–32 and 36–65; these read VEII…WTKD and KYYA…IKVV. 8 residues coordinate [4Fe-4S] cluster: C12, C15, C18, C22, C45, C48, C51, and C55.

[4Fe-4S] cluster is required as a cofactor.

Ferredoxins are iron-sulfur proteins that transfer electrons probably in the CO-dehydrogenase complex. This is an uncharacterized protein from Methanocaldococcus jannaschii (strain ATCC 43067 / DSM 2661 / JAL-1 / JCM 10045 / NBRC 100440) (Methanococcus jannaschii).